A 132-amino-acid chain; its full sequence is Small ribosomal subunit protein uS11 (132 aa).

A compositionally biased stretch (basic residues) spans methionine 1–arginine 16. Positions methionine 1 to glutamate 20 are disordered.

It belongs to the universal ribosomal protein uS11 family. Part of the 30S ribosomal subunit. Interacts with proteins S7 and S18. Binds to IF-3.

Its function is as follows. Located on the platform of the 30S subunit, it bridges several disparate RNA helices of the 16S rRNA. Forms part of the Shine-Dalgarno cleft in the 70S ribosome. The protein is Small ribosomal subunit protein uS11 of Clostridium botulinum (strain Loch Maree / Type A3).